The primary structure comprises 353 residues: Terpene synthase 1 (353 aa).

Residues 81 to 86 (DDAIDA) carry the DDxx(x)D/E motif motif. Residues 222-230 (NDLVSYEKE) carry the NDxxSxxxD/E motif motif.

This sequence belongs to the terpene synthase family.

It catalyses the reaction (2E,6E)-farnesyl diphosphate = (2S,3R,6S,9S)-(-)-protoillud-7-ene + diphosphate. Functionally, terpene synthase that converts its substrate farnesyl diphosphate (FPP) into the sesquiterpene protoillud-7-ene. The sequence is that of Terpene synthase 1 from Tieghemostelium lacteum (Slime mold).